The chain runs to 295 residues: Light-independent protochlorophyllide reductase iron-sulfur ATP-binding protein (295 aa).

Residues 39 to 44 (GIGKST) and K68 each bind ATP. Residue S43 participates in Mg(2+) binding. [4Fe-4S] cluster is bound by residues C124 and C158. Residues 209-210 (NR) and 233-235 (PDL) each bind ATP.

It belongs to the NifH/BchL/ChlL family. Homodimer. Protochlorophyllide reductase is composed of three subunits; BchL, BchN and BchB. Requires [4Fe-4S] cluster as cofactor.

The catalysed reaction is chlorophyllide a + oxidized 2[4Fe-4S]-[ferredoxin] + 2 ADP + 2 phosphate = protochlorophyllide a + reduced 2[4Fe-4S]-[ferredoxin] + 2 ATP + 2 H2O. It participates in porphyrin-containing compound metabolism; bacteriochlorophyll biosynthesis (light-independent). Functionally, component of the dark-operative protochlorophyllide reductase (DPOR) that uses Mg-ATP and reduced ferredoxin to reduce ring D of protochlorophyllide (Pchlide) to form chlorophyllide a (Chlide). This reaction is light-independent. The L component serves as a unique electron donor to the NB-component of the complex, and binds Mg-ATP. The chain is Light-independent protochlorophyllide reductase iron-sulfur ATP-binding protein from Rhodospirillum rubrum (strain ATCC 11170 / ATH 1.1.1 / DSM 467 / LMG 4362 / NCIMB 8255 / S1).